The sequence spans 278 residues: Checkpoint protein Hus1-like (278 aa).

Belongs to the HUS1 family. As to quaternary structure, component of the 9-1-1 checkpoint clamp complex consisting of Rad9 isoform A, Rad1 and Hus1-like; the interactions with Rad1 and Rad9 are direct. This complex probably also forms with Rad9 isoform B, however 9-1-1 complex containing Rad9 isoform A localizes to the nuclear periphery. As to expression, expressed in ovary.

Its subcellular location is the cytoplasm. It localises to the nucleus envelope. Component of the 9-1-1 checkpoint clamp complex. Involved in both meiotic and somatic DNA damage responses. Essential for activation of the meiotic checkpoint in response to double-strand DNA breaks; required for the S-phase checkpoint but not the G2-M phase checkpoint. Involved in double strand break repair by homologous recombination during meiosis; influences the organization of chromosomal DNA in the meiotic nucleus. This Drosophila melanogaster (Fruit fly) protein is Checkpoint protein Hus1-like.